We begin with the raw amino-acid sequence, 165 residues long: NADPH-dependent 7-cyano-7-deazaguanine reductase (165 aa).

Catalysis depends on C56, which acts as the Thioimide intermediate. The Proton donor role is filled by D63. Residues 78–80 (VES) and 97–98 (HE) each bind substrate.

The protein belongs to the GTP cyclohydrolase I family. QueF type 1 subfamily.

It localises to the cytoplasm. The catalysed reaction is 7-aminomethyl-7-carbaguanine + 2 NADP(+) = 7-cyano-7-deazaguanine + 2 NADPH + 3 H(+). It functions in the pathway tRNA modification; tRNA-queuosine biosynthesis. Catalyzes the NADPH-dependent reduction of 7-cyano-7-deazaguanine (preQ0) to 7-aminomethyl-7-deazaguanine (preQ1). This Bacillus pumilus (strain SAFR-032) protein is NADPH-dependent 7-cyano-7-deazaguanine reductase.